A 59-amino-acid polypeptide reads, in one-letter code: UPF0337 protein MM_2677 (59 aa).

2 stretches are compositionally biased toward basic and acidic residues: residues 1–24 and 33–59; these read MKEG…KESA and MEAK…EFEK. Residues 1–59 form a disordered region; sequence MKEGTKEEMEGKFSKAKGEIKESAGEMTGDIEMEAKGEAEKRKGEAQEKVGKIRKEFEK.

It belongs to the UPF0337 (CsbD) family.

The sequence is that of UPF0337 protein MM_2677 from Methanosarcina mazei (strain ATCC BAA-159 / DSM 3647 / Goe1 / Go1 / JCM 11833 / OCM 88) (Methanosarcina frisia).